Here is a 342-residue protein sequence, read N- to C-terminus: Tetraacyldisaccharide 4'-kinase (342 aa).

Residue Thr68–Thr75 coordinates ATP.

It belongs to the LpxK family.

The enzyme catalyses a lipid A disaccharide + ATP = a lipid IVA + ADP + H(+). The protein operates within glycolipid biosynthesis; lipid IV(A) biosynthesis; lipid IV(A) from (3R)-3-hydroxytetradecanoyl-[acyl-carrier-protein] and UDP-N-acetyl-alpha-D-glucosamine: step 6/6. In terms of biological role, transfers the gamma-phosphate of ATP to the 4'-position of a tetraacyldisaccharide 1-phosphate intermediate (termed DS-1-P) to form tetraacyldisaccharide 1,4'-bis-phosphate (lipid IVA). The polypeptide is Tetraacyldisaccharide 4'-kinase (Burkholderia thailandensis (strain ATCC 700388 / DSM 13276 / CCUG 48851 / CIP 106301 / E264)).